The sequence spans 996 residues: Leucine-rich repeat receptor-like kinase protein THICK TASSEL DWARF1 (996 aa).

The signal sequence occupies residues 1-26; the sequence is MPPPTFLLGLLLLLLLAAAAPAPASA. 21 LRR repeats span residues 78–103, 104–127, 128–151, 153–178, 180–201, 202–226, 251–275, 276–299, 300–323, 325–349, 351–371, 372–395, 397–419, 420–443, 445–466, 467–490, 491–514, 516–538, 539–562, 563–586, and 587–611; these read TSRV…VALL, DALA…LASM, PALR…PPAA, FPAL…APHA, SLRY…TFGD, LAAL…LSRL, LQSL…LARL, SRLD…LGAL, TSLR…FAAL, NLKL…DFPF, EVLQ…LGRN, GRLK…LCAG, NLQL…LGDC, KTLT…LFDL, QANM…VIAG, DKIG…IGNL, PALQ…IGRL, NLTR…LMGC, ASLG…VTSL, KILC…MANM, and TSLT…QFLV. Residues 646–666 form a helical membrane-spanning segment; that stretch reads KKLLVWLVVLLTLLVLAVLGA. The Protein kinase domain maps to 703–978; it reads LKEDNIIGKG…TMREVVHMLS (276 aa). Residues 709-717 and K731 each bind ATP; that span reads IGKGGAGIV. D828 functions as the Proton acceptor in the catalytic mechanism.

This sequence belongs to the protein kinase superfamily. Ser/Thr protein kinase family. In terms of tissue distribution, highly expressed in the apex of the vegetative seedlings. Lower expression in young leaves, ears and tassels, embryos and roots. Not expressed in the shoot meristem itself. Detected in the three outermost layers of the inflorescence meristem, and on its flanks at positions of prospective spikelet pair meristems. Not confined to meristematic cells but also detected in primordia of glumes, lemmas and stamens.

The protein resides in the membrane. It catalyses the reaction L-seryl-[protein] + ATP = O-phospho-L-seryl-[protein] + ADP + H(+). It carries out the reaction L-threonyl-[protein] + ATP = O-phospho-L-threonyl-[protein] + ADP + H(+). Receptor-like kinase protein that regulates meristem size during inflorescence and flower development. Promotes vegetative meristem growth and restricts inflorescence and floral meristem growth. Based on additive and synergistic phenotypes of double mutants, it is probable that unlike CLV1 and CLV2 in A.thaliana, TD1 and FAE2 do not function exclusively in a single pathway. However, KN-1 and TD1 do function in a linear pathway to maintain vegetative meristem homeostasis, but they may interact with different partners during development. The protein is Leucine-rich repeat receptor-like kinase protein THICK TASSEL DWARF1 (TD1) of Zea mays (Maize).